A 115-amino-acid chain; its full sequence is Probable non-functional immunoglobulin heavy variable 8-51-1 (115 aa).

A signal peptide spans methionine 1–glycine 17. A framework-1 region spans residues glutamate 18–serine 42. Residues alanine 19–glycine 115 enclose the Ig-like domain. Residues tryptophan 43–glutamate 50 are complementarity-determining-1. Residues isoleucine 51–valine 67 form a framework-2 region. Cysteine 55 and cysteine 113 are disulfide-bonded. Positions isoleucine 68 to glutamine 75 are complementarity-determining-2. Residues tyrosine 76–cysteine 113 are framework-3. The tract at residues alanine 114–glycine 115 is complementarity-determining-3.

Immunoglobulins are composed of two identical heavy chains and two identical light chains; disulfide-linked.

It localises to the secreted. The protein localises to the cell membrane. Probable non-functional open reading frame (ORF) of V region of the variable domain of immunoglobulin heavy chains. Non-functional ORF generally cannot participate in the synthesis of a productive immunoglobulin chain due to altered V-(D)-J or switch recombination and/or splicing site (at mRNA level) and/or conserved amino acid change (protein level). Immunoglobulins, also known as antibodies, are membrane-bound or secreted glycoproteins produced by B lymphocytes. In the recognition phase of humoral immunity, the membrane-bound immunoglobulins serve as receptors which, upon binding of a specific antigen, trigger the clonal expansion and differentiation of B lymphocytes into immunoglobulins-secreting plasma cells. Secreted immunoglobulins mediate the effector phase of humoral immunity, which results in the elimination of bound antigens. The antigen binding site is formed by the variable domain of one heavy chain, together with that of its associated light chain. Thus, each immunoglobulin has two antigen binding sites with remarkable affinity for a particular antigen. The variable domains are assembled by a process called V-(D)-J rearrangement and can then be subjected to somatic hypermutations which, after exposure to antigen and selection, allow affinity maturation for a particular antigen. The protein is Probable non-functional immunoglobulin heavy variable 8-51-1 of Homo sapiens (Human).